The chain runs to 351 residues: Phosphate acetyltransferase (351 aa).

It belongs to the phosphate acetyltransferase and butyryltransferase family.

The protein localises to the cytoplasm. It catalyses the reaction acetyl-CoA + phosphate = acetyl phosphate + CoA. The protein operates within metabolic intermediate biosynthesis; acetyl-CoA biosynthesis; acetyl-CoA from acetate: step 2/2. This chain is Phosphate acetyltransferase (pta), found in Rickettsia prowazekii (strain Madrid E).